The chain runs to 122 residues: Large ribosomal subunit protein uL14 (122 aa).

This sequence belongs to the universal ribosomal protein uL14 family. Part of the 50S ribosomal subunit. Forms a cluster with proteins L3 and L19. In the 70S ribosome, L14 and L19 interact and together make contacts with the 16S rRNA in bridges B5 and B8.

In terms of biological role, binds to 23S rRNA. Forms part of two intersubunit bridges in the 70S ribosome. The chain is Large ribosomal subunit protein uL14 from Shouchella clausii (strain KSM-K16) (Alkalihalobacillus clausii).